Reading from the N-terminus, the 373-residue chain is Ribonuclease D (373 aa).

In terms of domain architecture, 3'-5' exonuclease spans 3 to 171 (YQLITTDAGL…MAKRLVQETE (169 aa)). The 80-residue stretch at 210–289 (RPRQLGCLQK…AEAAELEESA (80 aa)) folds into the HRDC domain.

It belongs to the RNase D family. Requires a divalent metal cation as cofactor.

The protein resides in the cytoplasm. It carries out the reaction Exonucleolytic cleavage that removes extra residues from the 3'-terminus of tRNA to produce 5'-mononucleotides.. Its function is as follows. Exonuclease involved in the 3' processing of various precursor tRNAs. Initiates hydrolysis at the 3'-terminus of an RNA molecule and releases 5'-mononucleotides. The chain is Ribonuclease D from Serratia proteamaculans (strain 568).